Reading from the N-terminus, the 304-residue chain is Quinolinate synthase (304 aa).

Iminosuccinate is bound by residues histidine 24 and serine 41. Cysteine 86 is a [4Fe-4S] cluster binding site. Iminosuccinate-binding positions include 112–114 (YVN) and serine 129. Cysteine 171 provides a ligand contact to [4Fe-4S] cluster. Residues 197–199 (HPE) and threonine 214 each bind iminosuccinate. Cysteine 259 serves as a coordination point for [4Fe-4S] cluster.

Belongs to the quinolinate synthase family. Type 2 subfamily. It depends on [4Fe-4S] cluster as a cofactor.

Its subcellular location is the cytoplasm. The enzyme catalyses iminosuccinate + dihydroxyacetone phosphate = quinolinate + phosphate + 2 H2O + H(+). Its pathway is cofactor biosynthesis; NAD(+) biosynthesis; quinolinate from iminoaspartate: step 1/1. In terms of biological role, catalyzes the condensation of iminoaspartate with dihydroxyacetone phosphate to form quinolinate. This is Quinolinate synthase from Geobacter sp. (strain M21).